A 189-amino-acid polypeptide reads, in one-letter code: Large ribosomal subunit protein uL5 (189 aa).

This sequence belongs to the universal ribosomal protein uL5 family. Part of the 50S ribosomal subunit; part of the 5S rRNA/L5/L18/L25 subcomplex. Contacts the 5S rRNA and the P site tRNA. Forms a bridge to the 30S subunit in the 70S ribosome.

This is one of the proteins that bind and probably mediate the attachment of the 5S RNA into the large ribosomal subunit, where it forms part of the central protuberance. In the 70S ribosome it contacts protein S13 of the 30S subunit (bridge B1b), connecting the 2 subunits; this bridge is implicated in subunit movement. Contacts the P site tRNA; the 5S rRNA and some of its associated proteins might help stabilize positioning of ribosome-bound tRNAs. In Parafrankia sp. (strain EAN1pec), this protein is Large ribosomal subunit protein uL5.